A 192-amino-acid chain; its full sequence is Probable GTP-binding protein EngB (192 aa).

The EngB-type G domain maps to 22–192 (GRPEIVFVGR…LLASIDTFTQ (171 aa)). Residues 30-37 (GRSNVGKS), 57-61 (GKTRL), 75-78 (DLPG), 142-145 (TKWD), and 172-174 (YSS) each bind GTP. Residues serine 37 and threonine 59 each contribute to the Mg(2+) site.

It belongs to the TRAFAC class TrmE-Era-EngA-EngB-Septin-like GTPase superfamily. EngB GTPase family. Mg(2+) serves as cofactor.

In terms of biological role, necessary for normal cell division and for the maintenance of normal septation. The sequence is that of Probable GTP-binding protein EngB from Chlorobaculum tepidum (strain ATCC 49652 / DSM 12025 / NBRC 103806 / TLS) (Chlorobium tepidum).